Here is a 230-residue protein sequence, read N- to C-terminus: DNA repair protein RecO (230 aa).

The protein belongs to the RecO family.

Functionally, involved in DNA repair and RecF pathway recombination. In Pseudoalteromonas translucida (strain TAC 125), this protein is DNA repair protein RecO.